A 118-amino-acid chain; its full sequence is MRSKFKDEHPFEKRKAEAERIRQKYADRIPVICEKVEKSDIATIDKKKYLVPSDLTVGQFVYVIRKRIKLSPEKAIFIFVDEVLPPTAALMSSIYEEHKDEDGFLYITYSGENTFGSI.

Residue Gly116 is the site of Phosphatidylethanolamine amidated glycine attachment. Residues 117–118 constitute a propeptide, removed in mature form; sequence SI.

Belongs to the ATG8 family. Conjugation to phosphatidylethanolamine (PE) leads to homodimerization. Interacts with ATG1, ATG3, ATG4, ATG7 and ATG12. The C-terminal Ser-117 and Ile-118 residues of ATG8 are removed by ATG4 to expose Gly-116 at the C-terminus. This Gly-116 forms then a thioester bond with ATG7 (E1-like activating enzyme) before being transferred to ATG3 (the specific E2 conjugating enzyme), in order to be finally amidated with phosphatidylethanolamine. This lipid modification anchors ATG8 to membranes and can be reversed by ATG4, releasing soluble ATG8.

It localises to the cytoplasmic vesicle. Its subcellular location is the cvt vesicle membrane. The protein resides in the autophagosome membrane. The protein localises to the vacuole membrane. Its function is as follows. Ubiquitin-like modifier involved in cytoplasm to vacuole transport (Cvt) vesicles and autophagosome formation. With ATG4, mediates the delivery of the vesicles and autophagosomes to the vacuole via the microtubule cytoskeleton. Required for selective autophagic degradation of the nucleus (nucleophagy) as well as for mitophagy which contributes to regulate mitochondrial quantity and quality by eliminating the mitochondria to a basal level to fulfill cellular energy requirements and preventing excess ROS production. Also participates in membrane fusion events that take place in the early secretory pathway. Also involved in endoplasmic reticulum-specific autophagic process and is essential for the survival of cells subjected to severe ER stress. The ATG8-PE conjugate mediates tethering between adjacent membranes and stimulates membrane hemifusion, leading to expansion of the autophagosomal membrane during autophagy. Moreover not only conjugation, but also subsequent ATG8-PE deconjugation is an important step required to facilitate multiple events during macroautophagy, and especially for efficient autophagosome biogenesis, the assembly of ATG9-containing tubulovesicular clusters into phagophores/autophagosomes, and for the disassembly of PAS-associated ATG components. Contributes to conidiation by regulating the conidial levels of the conidiation-related protein CP15 and mediates fungal oxidation resistance by controlling total superoxide dismutase (SOD) activity. The protein is Autophagy-related protein 8 of Beauveria bassiana (strain ARSEF 2860) (White muscardine disease fungus).